An 887-amino-acid polypeptide reads, in one-letter code: Valine--tRNA ligase (887 aa).

Positions 48 to 58 (PNVTGVLHVGH) match the 'HIGH' region motif. The 'KMSKS' region signature appears at 527–531 (KMSKS). An ATP-binding site is contributed by K530. Residues 814–887 (LAGLVDIEAE…EASDRLKKLS (74 aa)) are a coiled coil.

Belongs to the class-I aminoacyl-tRNA synthetase family. ValS type 1 subfamily. In terms of assembly, monomer.

The protein localises to the cytoplasm. The enzyme catalyses tRNA(Val) + L-valine + ATP = L-valyl-tRNA(Val) + AMP + diphosphate. Catalyzes the attachment of valine to tRNA(Val). As ValRS can inadvertently accommodate and process structurally similar amino acids such as threonine, to avoid such errors, it has a 'posttransfer' editing activity that hydrolyzes mischarged Thr-tRNA(Val) in a tRNA-dependent manner. This Desulfotalea psychrophila (strain LSv54 / DSM 12343) protein is Valine--tRNA ligase.